The sequence spans 487 residues: FAD-dependent oxidoreductase domain-containing protein 1 (487 aa).

Residues 62–82 (EQADVVIIGGGILGLSVAFWL) form a helical membrane-spanning segment.

Associates with components of the mitochondrial respiratory chain complex I. The cofactor is FAD.

The protein localises to the mitochondrion inner membrane. Functionally, required for the assembly of the mitochondrial membrane respiratory chain NADH dehydrogenase (Complex I). Involved in mid-late stages of complex I assembly. In Mus musculus (Mouse), this protein is FAD-dependent oxidoreductase domain-containing protein 1 (Foxred1).